The chain runs to 73 residues: Sec-independent protein translocase protein TatA (73 aa).

Residues 1-21 (MGSFSIWHWLIVLVIVMLVFG) form a helical membrane-spanning segment. Residues 43-73 (MKEGDDKAAPAKELRDSTTIDVDAKEKTRQQ) form a disordered region.

The protein belongs to the TatA/E family. In terms of assembly, the Tat system comprises two distinct complexes: a TatABC complex, containing multiple copies of TatA, TatB and TatC subunits, and a separate TatA complex, containing only TatA subunits. Substrates initially bind to the TatABC complex, which probably triggers association of the separate TatA complex to form the active translocon.

It is found in the cell inner membrane. In terms of biological role, part of the twin-arginine translocation (Tat) system that transports large folded proteins containing a characteristic twin-arginine motif in their signal peptide across membranes. TatA could form the protein-conducting channel of the Tat system. The polypeptide is Sec-independent protein translocase protein TatA (Cupriavidus pinatubonensis (strain JMP 134 / LMG 1197) (Cupriavidus necator (strain JMP 134))).